Reading from the N-terminus, the 310-residue chain is Pantoate--beta-alanine ligase (310 aa).

32–39 (MGYLHEGH) provides a ligand contact to ATP. The active-site Proton donor is the H39. A (R)-pantoate-binding site is contributed by Q63. Q63 lines the beta-alanine pocket. 175–178 (GKKD) contacts ATP. Q181 is a binding site for (R)-pantoate. 212 to 215 (MSSR) is an ATP binding site.

This sequence belongs to the pantothenate synthetase family. As to quaternary structure, homodimer. In terms of tissue distribution, expressed in roots, cotyledons, leaves, stems, cauline leaves, stigma, sepals and petals.

It is found in the cytoplasm. It localises to the cytosol. It catalyses the reaction (R)-pantoate + beta-alanine + ATP = (R)-pantothenate + AMP + diphosphate + H(+). The protein operates within cofactor biosynthesis; (R)-pantothenate biosynthesis; (R)-pantothenate from (R)-pantoate and beta-alanine: step 1/1. With respect to regulation, enzyme kinetics do not match Michaelis-Menten kinetics, suggesting allosteric behavior. Inhibited by high pantoate levels. Its function is as follows. Catalyzes the condensation of pantoate with beta-alanine to form pantothenate. Essential for panthotenate biosynthesis. The polypeptide is Pantoate--beta-alanine ligase (Arabidopsis thaliana (Mouse-ear cress)).